A 435-amino-acid polypeptide reads, in one-letter code: GTPase Der (435 aa).

EngA-type G domains follow at residues 4–167 (PVVA…PEKD) and 175–350 (IRFS…DNHN). GTP is bound by residues 10 to 17 (GRPNVGKS), 57 to 61 (DTGGI), 119 to 122 (NKAD), 181 to 188 (GRPNVGKS), 228 to 232 (DTAGI), and 293 to 296 (NKWD). A KH-like domain is found at 351-435 (KRVQSATLND…PIHLIERARK (85 aa)).

It belongs to the TRAFAC class TrmE-Era-EngA-EngB-Septin-like GTPase superfamily. EngA (Der) GTPase family. Associates with the 50S ribosomal subunit.

In terms of biological role, GTPase that plays an essential role in the late steps of ribosome biogenesis. The polypeptide is GTPase Der (Levilactobacillus brevis (strain ATCC 367 / BCRC 12310 / CIP 105137 / JCM 1170 / LMG 11437 / NCIMB 947 / NCTC 947) (Lactobacillus brevis)).